Consider the following 121-residue polypeptide: Large ribosomal subunit protein bL19 (121 aa).

The protein belongs to the bacterial ribosomal protein bL19 family.

Its function is as follows. This protein is located at the 30S-50S ribosomal subunit interface and may play a role in the structure and function of the aminoacyl-tRNA binding site. The chain is Large ribosomal subunit protein bL19 from Chlorobaculum tepidum (strain ATCC 49652 / DSM 12025 / NBRC 103806 / TLS) (Chlorobium tepidum).